Consider the following 407-residue polypeptide: Accessory Sec system protein translocase subunit SecY2 (407 aa).

Transmembrane regions (helical) follow at residues 13–33, 65–85, 104–124, 133–153, 158–178, 192–212, 248–268, 287–307, 345–365, and 370–390; these read FLWT…TLPF, FFSI…MFTV, MLLT…NLPL, GTIV…LIWL, SSMG…SYIP, PLIL…AVLV, IMYA…LLFF, IPWF…FAFI, FAFV…LLIF, and YMRL…VFSI.

The protein belongs to the SecY/SEC61-alpha family. SecY2 subfamily. As to quaternary structure, may form heterotrimers with SecE and SecG subunits (Potential). Component of the accessory SecA2/SecY2 protein translocase complex required to export cell wall protein GspB.

It localises to the cell membrane. The central subunit of a protein translocation channel (Potential). Part of the accessory SecA2/SecY2 system specifically required to export GspB, a serine-rich repeat cell wall protein encoded upstream in the same operon. This chain is Accessory Sec system protein translocase subunit SecY2, found in Streptococcus gordonii.